The sequence spans 466 residues: 3-isopropylmalate dehydratase large subunit 1 (466 aa).

3 residues coordinate [4Fe-4S] cluster: Cys-347, Cys-407, and Cys-410.

It belongs to the aconitase/IPM isomerase family. LeuC type 1 subfamily. In terms of assembly, heterodimer of LeuC and LeuD. Requires [4Fe-4S] cluster as cofactor.

It catalyses the reaction (2R,3S)-3-isopropylmalate = (2S)-2-isopropylmalate. It functions in the pathway amino-acid biosynthesis; L-leucine biosynthesis; L-leucine from 3-methyl-2-oxobutanoate: step 2/4. Catalyzes the isomerization between 2-isopropylmalate and 3-isopropylmalate, via the formation of 2-isopropylmaleate. The sequence is that of 3-isopropylmalate dehydratase large subunit 1 from Salmonella choleraesuis (strain SC-B67).